The sequence spans 375 residues: 23S rRNA (uracil(747)-C(5))-methyltransferase RlmC (375 aa).

[4Fe-4S] cluster contacts are provided by C3, C11, C14, and C87. Residues Q212, F241, E262, and N307 each contribute to the S-adenosyl-L-methionine site. The active-site Nucleophile is the C334.

The protein belongs to the class I-like SAM-binding methyltransferase superfamily. RNA M5U methyltransferase family. RlmC subfamily.

The enzyme catalyses uridine(747) in 23S rRNA + S-adenosyl-L-methionine = 5-methyluridine(747) in 23S rRNA + S-adenosyl-L-homocysteine + H(+). Catalyzes the formation of 5-methyl-uridine at position 747 (m5U747) in 23S rRNA. The protein is 23S rRNA (uracil(747)-C(5))-methyltransferase RlmC of Salmonella arizonae (strain ATCC BAA-731 / CDC346-86 / RSK2980).